Consider the following 396-residue polypeptide: UDP-galactose translocator (396 aa).

Helical transmembrane passes span 3-23 (AVGA…AGAL), 37-57 (YISL…IRYA), 65-85 (FFAT…CLLL), 97-117 (LVLF…KLAV), 140-160 (TFQV…VLML), 169-189 (WASL…QAGG), 200-220 (GAGL…GVYF), 238-258 (LGLF…GTAV), 269-289 (PAVW…AVVV), and 315-335 (LFGF…IGAV). The disordered stretch occupies residues 358–379 (PCVHQQPPGQPPPPQLSSHRGD). An ER retention motif motif is present at residues 392-396 (KVKGS).

This sequence belongs to the nucleotide-sugar transporter family. SLC35A subfamily. In terms of assembly, interacts with SLC35A3; the interaction is reduced in the presence of SLC35A4. Found in a complex with SLC35A3 and SLC35A4. As to quaternary structure, interacts with B4GALT4.

The protein localises to the endoplasmic reticulum membrane. It is found in the golgi apparatus membrane. It carries out the reaction UMP(out) + UDP-alpha-D-galactose(in) = UMP(in) + UDP-alpha-D-galactose(out). It catalyses the reaction UDP-N-acetyl-alpha-D-galactosamine(in) + UMP(out) = UDP-N-acetyl-alpha-D-galactosamine(out) + UMP(in). The catalysed reaction is UMP(out) + UDP-alpha-D-glucose(in) = UMP(in) + UDP-alpha-D-glucose(out). The enzyme catalyses UMP(out) + UDP-N-acetyl-alpha-D-glucosamine(in) = UMP(in) + UDP-N-acetyl-alpha-D-glucosamine(out). It carries out the reaction UDP-alpha-D-galactose(in) + AMP(out) = UDP-alpha-D-galactose(out) + AMP(in). It catalyses the reaction UDP-alpha-D-galactose(in) + CMP(out) = UDP-alpha-D-galactose(out) + CMP(in). The catalysed reaction is UDP-N-acetyl-alpha-D-galactosamine(out) + UDP-alpha-D-galactose(in) = UDP-N-acetyl-alpha-D-galactosamine(in) + UDP-alpha-D-galactose(out). The enzyme catalyses UDP-N-acetyl-alpha-D-glucosamine(out) + UDP-alpha-D-galactose(in) = UDP-N-acetyl-alpha-D-glucosamine(in) + UDP-alpha-D-galactose(out). It carries out the reaction UDP-alpha-D-galactose(in) + UDP-alpha-D-glucose(out) = UDP-alpha-D-galactose(out) + UDP-alpha-D-glucose(in). It catalyses the reaction UMP(out) + CMP(in) = UMP(in) + CMP(out). The catalysed reaction is UMP(out) + AMP(in) = UMP(in) + AMP(out). Its function is as follows. Transports uridine diphosphate galactose (UDP-galactose) from the cytosol into the Golgi apparatus, functioning as an antiporter that exchanges UDP-galactose for UMP. It is also able to exchange UDP-galactose for AMP and CMP, and to transport UDP-N-acetylgalactosamine (UDP-GalNAc) and other nucleotide sugars. As a provider of UDP-galactose to galactosyltransferases present in the Golgi apparatus, it is necessary for globotriaosylceramide/globoside (Gb3Cer) synthesis from lactosylceramide. In Homo sapiens (Human), this protein is UDP-galactose translocator.